The chain runs to 327 residues: Phenylalanine--tRNA ligase alpha subunit (327 aa).

Glutamate 252 contacts Mg(2+).

The protein belongs to the class-II aminoacyl-tRNA synthetase family. Phe-tRNA synthetase alpha subunit type 1 subfamily. As to quaternary structure, tetramer of two alpha and two beta subunits. The cofactor is Mg(2+).

Its subcellular location is the cytoplasm. The enzyme catalyses tRNA(Phe) + L-phenylalanine + ATP = L-phenylalanyl-tRNA(Phe) + AMP + diphosphate + H(+). The chain is Phenylalanine--tRNA ligase alpha subunit from Escherichia coli O127:H6 (strain E2348/69 / EPEC).